Reading from the N-terminus, the 233-residue chain is Ribose-5-phosphate isomerase A (233 aa).

Residues 28-31 (TGST), 83-86 (DGAD), and 96-99 (KGGG) contribute to the substrate site. Glu105 acts as the Proton acceptor in catalysis. Lys123 contributes to the substrate binding site.

It belongs to the ribose 5-phosphate isomerase family. As to quaternary structure, homodimer.

It carries out the reaction aldehydo-D-ribose 5-phosphate = D-ribulose 5-phosphate. The protein operates within carbohydrate degradation; pentose phosphate pathway; D-ribose 5-phosphate from D-ribulose 5-phosphate (non-oxidative stage): step 1/1. Its function is as follows. Catalyzes the reversible conversion of ribose-5-phosphate to ribulose 5-phosphate. The polypeptide is Ribose-5-phosphate isomerase A (Rhizobium rhizogenes (strain K84 / ATCC BAA-868) (Agrobacterium radiobacter)).